The chain runs to 89 residues: Small ribosomal subunit protein uS14A (89 aa).

Belongs to the universal ribosomal protein uS14 family. In terms of assembly, part of the 30S ribosomal subunit. Contacts proteins S3 and S10.

Functionally, binds 16S rRNA, required for the assembly of 30S particles and may also be responsible for determining the conformation of the 16S rRNA at the A site. This chain is Small ribosomal subunit protein uS14A, found in Staphylococcus haemolyticus (strain JCSC1435).